Here is a 439-residue protein sequence, read N- to C-terminus: Probable eukaryotic translation initiation factor 5-1 (439 aa).

29 to 36 (GRGNGIKT) serves as a coordination point for GTP. Positions 143–245 (LKNPPEQKKS…REAAEKRMKE (103 aa)) are disordered. A compositionally biased stretch (basic and acidic residues) spans 147-186 (PEQKKSSKDKKSMRRAEKERLREGEAADEEMRKLKKEAAS). Acidic residues predominate over residues 214–228 (DENDQADSEEDDDDV). At Thr232 the chain carries Phosphothreonine. Positions 234 to 245 (TSREAAEKRMKE) are enriched in basic and acidic residues. In terms of domain architecture, W2 spans 283–439 (KIPENAHEKL…QNAESESEEE (157 aa)). A phosphoserine mark is found at Ser434 and Ser436.

The protein belongs to the eIF-2-beta/eIF-5 family.

Catalyzes the hydrolysis of GTP bound to the 40S ribosomal initiation complex (40S.mRNA.Met-tRNA[F].eIF-2.GTP) with the subsequent joining of a 60S ribosomal subunit resulting in the release of eIF-2 and the guanine nucleotide. The subsequent joining of a 60S ribosomal subunit results in the formation of a functional 80S initiation complex (80S.mRNA.Met-tRNA[F]). The polypeptide is Probable eukaryotic translation initiation factor 5-1 (Arabidopsis thaliana (Mouse-ear cress)).